The sequence spans 123 residues: Large ribosomal subunit protein bL19 (123 aa).

Belongs to the bacterial ribosomal protein bL19 family.

This protein is located at the 30S-50S ribosomal subunit interface and may play a role in the structure and function of the aminoacyl-tRNA binding site. This is Large ribosomal subunit protein bL19 from Bdellovibrio bacteriovorus (strain ATCC 15356 / DSM 50701 / NCIMB 9529 / HD100).